The following is a 339-amino-acid chain: Annexin A2 (339 aa).

S2 carries the N-acetylserine modification. An S100A10-binding site region spans residues 2–24; it reads STVHEILCKLSLEGDHSTPPSAY. Y24 is subject to Phosphotyrosine; by SRC. At S26 the chain carries Phosphoserine; by PKC. Annexin repeat units follow at residues 33–104 and 105–176; these read FDAE…GLLK and TPAQ…ALAK. An N6-acetyllysine; alternate modification is found at K49. K49 is covalently cross-linked (Glycyl lysine isopeptide (Lys-Gly) (interchain with G-Cter in SUMO1); alternate). K49 participates in a covalent cross-link: Glycyl lysine isopeptide (Lys-Gly) (interchain with G-Cter in SUMO2); alternate. Position 152 is an N6-acetyllysine (K152). S184 carries the phosphoserine modification. 2 Annexin repeats span residues 189 to 261 and 265 to 336; these read ELID…NLVQ and NKPL…YLCG. Position 199 is a phosphotyrosine (Y199). K227 is subject to N6-acetyllysine.

This sequence belongs to the annexin family. Heterotetramer containing 2 light chains of S100A10/p11 and 2 heavy chains of ANXA2/p36. Interacts with ATP1B1. Interacts with DYSF. Interacts with COCH. Interacts (via repeat Annexin 1) with PCSK9 (via the C-terminal domain); the interaction inhibits the degradation of LDLR. Interacts with CEACAM1 (via the cytoplasmic domain); this interaction is regulated by phosphorylation of CEACAM1. Interacts with APPL2 and APPL1; targets APPL2 to endosomes and acting in parallel to RAB5A. Interacts with S100A4. May interact with UBAP2. Interacts with PLEKHG4B; this interaction is required for PLEKHG4B localization to cell-cell adhesions. Interacts with FAM13A. Interacts with salivary cystatin-L2 (via loop 2) from the tick Ixodes scapularis; the interaction results in reduced activation of mouse NLRC4 inflammasome formation upon Anaplasma phagocytophilum infection. Post-translationally, ISGylated.

The protein resides in the secreted. It localises to the extracellular space. Its subcellular location is the extracellular matrix. It is found in the basement membrane. The protein localises to the melanosome. The protein resides in the early endosome. Functionally, calcium-regulated membrane-binding protein whose affinity for calcium is greatly enhanced by anionic phospholipids. It binds two calcium ions with high affinity. May be involved in heat-stress response. Inhibits PCSK9-enhanced LDLR degradation, probably reduces PCSK9 protein levels via a translational mechanism but also competes with LDLR for binding with PCSK9. Binds to endosomes damaged by phagocytosis of particulate wear debris and participates in endosomal membrane stabilization, thereby limiting NLRP3 inflammasome activation. Required for endothelial cell surface plasmin generation and may support fibrinolytic surveillance and neoangiogenesis. In terms of biological role, (Microbial infection) Regulates the formation of the NLRC4 inflammasome triggered by Anaplasma phagocytophilum infection. Its function is as follows. (Microbial infection) Protects against Klebsiella pneumoniae infection. Attenuates bacteria-induced pulmonary inflammation and promotes intro-abdominal pathogen clearance. Promotes anti-inflammatory responses by facilitating TLR4 internalization and translocation into early endosomal membranes; this leads to activation of TRAM-dependent endosomal signaling and release of anti-inflammatory cytokines. (Microbial infection) Promotes macrophage phagocytic efficiency towards Cryptococcus neoformans and ability to control fungal infection inside the cells. Functionally, (Microbial infection) Contributes to protection against Pseudomonas aeruginosa infection by regulating autophagy via the AKT1-mTOR-ULK1/2 signaling pathway and activation of Rho GTPases via FAM13A-mediated mechanism. The chain is Annexin A2 (Anxa2) from Mus musculus (Mouse).